Reading from the N-terminus, the 205-residue chain is Nucleoside triphosphate pyrophosphatase (205 aa).

The active-site Proton acceptor is the aspartate 76.

The protein belongs to the Maf family. A divalent metal cation is required as a cofactor.

It is found in the cytoplasm. It catalyses the reaction a ribonucleoside 5'-triphosphate + H2O = a ribonucleoside 5'-phosphate + diphosphate + H(+). The catalysed reaction is a 2'-deoxyribonucleoside 5'-triphosphate + H2O = a 2'-deoxyribonucleoside 5'-phosphate + diphosphate + H(+). In terms of biological role, nucleoside triphosphate pyrophosphatase. May have a dual role in cell division arrest and in preventing the incorporation of modified nucleotides into cellular nucleic acids. The polypeptide is Nucleoside triphosphate pyrophosphatase (Orientia tsutsugamushi (strain Boryong) (Rickettsia tsutsugamushi)).